We begin with the raw amino-acid sequence, 35 residues long: Beta/delta-theraphotoxin-Pre1a (35 aa).

3 disulfide bridges follow: Cys-3/Cys-18, Cys-10/Cys-23, and Cys-17/Cys-30.

The protein belongs to the neurotoxin 10 (Hwtx-1) family. As to expression, expressed by the venom gland.

The protein resides in the secreted. Functionally, gating-modifier toxin that both inhibits the peak current of human Nav1.1/SCN1A, rat Nav1.2/SCN2A, human Nav1.6/SCN8A, and human Nav1.7/SCN9A and concurrently inhibits fast inactivation of human Nav1.1 and rat Nav1.3/SCN3A. The relative rank order potency for Nav modulation is Nav1.3 (inactivation EC(50)=45 nM) &gt; Nav1.7 &gt; Nav1.2 &gt; Nav1.1 (inactivation) &gt; Nav1.1 &gt; Nav1.6 &gt; Nav1.3 (IC(50)=8 uM). The DII and DIV S3-S4 loops of Nav channel voltage sensors are important for the interaction of this toxin with Nav channels but cannot account for its unique subtype selectivity. It is the variability of the S1-S2 loops between NaV channels which contributes substantially to the selectivity profile observed for this toxin, particularly with regards to fast inactivation. This toxin may bind the channel in the resting state. This Psalmopoeus reduncus (Costa Rican orangemouth tarantula) protein is Beta/delta-theraphotoxin-Pre1a.